A 435-amino-acid chain; its full sequence is Elongation factor 1-alpha (435 aa).

The tr-type G domain occupies 5–226 (KTHINLVVIG…DTMEPPKRPT (222 aa)). Positions 14 to 21 (GHVDSGKS) are G1. 14–21 (GHVDSGKS) is a GTP binding site. Residues 70–74 (GITID) form a G2 region. Residues 91-94 (DAPG) form a G3 region. Residues 91-95 (DAPGH) and 151-154 (NKMD) contribute to the GTP site. Residues 151–154 (NKMD) form a G4 region. The tract at residues 190 to 192 (SGF) is G5.

Belongs to the TRAFAC class translation factor GTPase superfamily. Classic translation factor GTPase family. EF-Tu/EF-1A subfamily.

It localises to the cytoplasm. In terms of biological role, this protein promotes the GTP-dependent binding of aminoacyl-tRNA to the A-site of ribosomes during protein biosynthesis. The sequence is that of Elongation factor 1-alpha from Cryptosporidium parvum.